We begin with the raw amino-acid sequence, 339 residues long: Anthranilate phosphoribosyltransferase (339 aa).

5-phospho-alpha-D-ribose 1-diphosphate-binding positions include Gly81, 84-85 (GD), Thr89, 91-94 (NVST), 109-117 (KHGNRSVSS), and Ser121. Gly81 lines the anthranilate pocket. Ser93 serves as a coordination point for Mg(2+). Residue Asn112 coordinates anthranilate. Anthranilate is bound at residue Arg167. Mg(2+) contacts are provided by Asp226 and Glu227.

This sequence belongs to the anthranilate phosphoribosyltransferase family. Homodimer. Mg(2+) is required as a cofactor.

The catalysed reaction is N-(5-phospho-beta-D-ribosyl)anthranilate + diphosphate = 5-phospho-alpha-D-ribose 1-diphosphate + anthranilate. The protein operates within amino-acid biosynthesis; L-tryptophan biosynthesis; L-tryptophan from chorismate: step 2/5. Catalyzes the transfer of the phosphoribosyl group of 5-phosphorylribose-1-pyrophosphate (PRPP) to anthranilate to yield N-(5'-phosphoribosyl)-anthranilate (PRA). The polypeptide is Anthranilate phosphoribosyltransferase (Persephonella marina (strain DSM 14350 / EX-H1)).